We begin with the raw amino-acid sequence, 200 residues long: Glycerol-3-phosphate acyltransferase (200 aa).

A run of 5 helical transmembrane segments spans residues 8–28 (ALALWGVIGYLLGSIPFGMVL), 57–77 (LAAALTLVLDGGKGVVAVLAA), 88–108 (IAGLMAMIGHCYPVWLRFAGG), 114–134 (FLGIVLALAFPVGVGCCLAWL), and 159–179 (FLLGFPGAVVLLILLGALIFW).

Belongs to the PlsY family. As to quaternary structure, probably interacts with PlsX.

The protein localises to the cell inner membrane. The catalysed reaction is an acyl phosphate + sn-glycerol 3-phosphate = a 1-acyl-sn-glycero-3-phosphate + phosphate. Its pathway is lipid metabolism; phospholipid metabolism. Functionally, catalyzes the transfer of an acyl group from acyl-phosphate (acyl-PO(4)) to glycerol-3-phosphate (G3P) to form lysophosphatidic acid (LPA). This enzyme utilizes acyl-phosphate as fatty acyl donor, but not acyl-CoA or acyl-ACP. The polypeptide is Glycerol-3-phosphate acyltransferase (Roseobacter denitrificans (strain ATCC 33942 / OCh 114) (Erythrobacter sp. (strain OCh 114))).